Consider the following 552-residue polypeptide: CTP synthase (552 aa).

Positions 1–265 (MTKYIFITGG…DEIVVRKLRL (265 aa)) are amidoligase domain. S13 lines the CTP pocket. S13 contributes to the UTP binding site. Residues 14-19 (SLGKGI) and D71 contribute to the ATP site. 2 residues coordinate Mg(2+): D71 and E139. CTP-binding positions include 146–148 (DIE), 186–191 (KTKPTQ), and K222. UTP-binding positions include 186 to 191 (KTKPTQ) and K222. The region spanning 290-541 (TVAMVGKYVN…VRAARARSEG (252 aa)) is the Glutamine amidotransferase type-1 domain. Residue G351 coordinates L-glutamine. C378 functions as the Nucleophile; for glutamine hydrolysis in the catalytic mechanism. L-glutamine contacts are provided by residues 379–382 (LGMQ), E402, and R469. Catalysis depends on residues H514 and E516.

Belongs to the CTP synthase family. As to quaternary structure, homotetramer.

It carries out the reaction UTP + L-glutamine + ATP + H2O = CTP + L-glutamate + ADP + phosphate + 2 H(+). It catalyses the reaction L-glutamine + H2O = L-glutamate + NH4(+). The catalysed reaction is UTP + NH4(+) + ATP = CTP + ADP + phosphate + 2 H(+). It participates in pyrimidine metabolism; CTP biosynthesis via de novo pathway; CTP from UDP: step 2/2. With respect to regulation, allosterically activated by GTP, when glutamine is the substrate; GTP has no effect on the reaction when ammonia is the substrate. The allosteric effector GTP functions by stabilizing the protein conformation that binds the tetrahedral intermediate(s) formed during glutamine hydrolysis. Inhibited by the product CTP, via allosteric rather than competitive inhibition. In terms of biological role, catalyzes the ATP-dependent amination of UTP to CTP with either L-glutamine or ammonia as the source of nitrogen. Regulates intracellular CTP levels through interactions with the four ribonucleotide triphosphates. In Methylococcus capsulatus (strain ATCC 33009 / NCIMB 11132 / Bath), this protein is CTP synthase.